The primary structure comprises 267 residues: Glucosamine-6-phosphate deaminase (267 aa).

Catalysis depends on D76, which acts as the Proton acceptor; for enolization step. D145 serves as the catalytic For ring-opening step. The active-site Proton acceptor; for ring-opening step is the H147. E152 serves as the catalytic For ring-opening step.

The protein belongs to the glucosamine/galactosamine-6-phosphate isomerase family. As to quaternary structure, homohexamer.

It is found in the cytoplasm. It catalyses the reaction alpha-D-glucosamine 6-phosphate + H2O = beta-D-fructose 6-phosphate + NH4(+). Its pathway is nucleotide-sugar biosynthesis; UDP-N-acetyl-alpha-D-glucosamine biosynthesis; alpha-D-glucosamine 6-phosphate from D-fructose 6-phosphate: step 1/1. Functionally, catalyzes the reversible conversion of alpha-D-glucosamine 6-phosphate (GlcN-6P) into beta-D-fructose 6-phosphate (Fru-6P) and ammonium ion, a regulatory reaction step in de novo uridine diphosphate-N-acetyl-alpha-D-glucosamine (UDP-GlcNAc) biosynthesis via hexosamine pathway. The protein is Glucosamine-6-phosphate deaminase of Dictyostelium discoideum (Social amoeba).